Here is a 457-residue protein sequence, read N- to C-terminus: Chromosomal replication initiator protein DnaA (457 aa).

A domain I, interacts with DnaA modulators region spans residues 1–90 (MDTNNNIEKE…HSVDVRIEVA (90 aa)). Residues 91-112 (PKIQINAQSNINYKAIKTSVKD) are domain II. Residues 113–323 (SYTFENFVVG…GAIIKISVNA (211 aa)) form a domain III, AAA+ region region. ATP-binding residues include Gly153, Gly155, Lys156, and Thr157. The segment at 324 to 457 (NLMNASIDLN…DKKTAFNSSE (134 aa)) is domain IV, binds dsDNA.

This sequence belongs to the DnaA family. Oligomerizes as a right-handed, spiral filament on DNA at oriC. Interacts via domain I with HobA. In a crystal with domains I and II of DnaA HobA forms tetramers with DnaA fragments bound at the dimer interface of the tetramer.

The protein localises to the cytoplasm. It localises to the cell inner membrane. Functionally, plays an essential role in the initiation and regulation of chromosomal replication. ATP-DnaA binds to the origin of replication (oriC) to initiate formation of the DNA replication initiation complex once per cell cycle. Binds the DnaA box (a 9 base pair repeat at the origin) and separates the double-stranded (ds)DNA. Forms a right-handed helical filament on oriC DNA; dsDNA binds to the exterior of the filament while single-stranded (ss)DNA is stabiized in the filament's interior. The ATP-DnaA-oriC complex binds and stabilizes one strand of the AT-rich DNA unwinding element (DUE), permitting loading of DNA polymerase. After initiation quickly degrades to an ADP-DnaA complex that is not apt for DNA replication. Binds acidic phospholipids. The DnaA box is 5'-TTATC[CA]A[CA]A-3' in this bacterium cycle. Multiple discrete DnaA-oriC complexes can be seen as DnaA levels increase. Binding of DnaA to oriC is increased by HobA; some chi-type structures can be seen by electron microscopy. Strand separation requires the DnaA boxes and adjacent DnaA-trio motifs but works equally well with ADP or ATP. This chain is Chromosomal replication initiator protein DnaA, found in Helicobacter pylori (strain ATCC 700392 / 26695) (Campylobacter pylori).